The following is a 516-amino-acid chain: Probable malate:quinone oxidoreductase (516 aa).

Belongs to the MQO family. The cofactor is FAD.

The enzyme catalyses (S)-malate + a quinone = a quinol + oxaloacetate. The protein operates within carbohydrate metabolism; tricarboxylic acid cycle; oxaloacetate from (S)-malate (quinone route): step 1/1. The chain is Probable malate:quinone oxidoreductase from Mycobacterium sp. (strain MCS).